The primary structure comprises 72 residues: Translation initiation factor IF-1 (72 aa).

The S1-like domain maps to 1 to 72; sequence MAKEELLEFP…TKGRITYRFK (72 aa).

It belongs to the IF-1 family. As to quaternary structure, component of the 30S ribosomal translation pre-initiation complex which assembles on the 30S ribosome in the order IF-2 and IF-3, IF-1 and N-formylmethionyl-tRNA(fMet); mRNA recruitment can occur at any time during PIC assembly.

The protein localises to the cytoplasm. One of the essential components for the initiation of protein synthesis. Stabilizes the binding of IF-2 and IF-3 on the 30S subunit to which N-formylmethionyl-tRNA(fMet) subsequently binds. Helps modulate mRNA selection, yielding the 30S pre-initiation complex (PIC). Upon addition of the 50S ribosomal subunit IF-1, IF-2 and IF-3 are released leaving the mature 70S translation initiation complex. In Caulobacter vibrioides (strain ATCC 19089 / CIP 103742 / CB 15) (Caulobacter crescentus), this protein is Translation initiation factor IF-1.